The following is a 282-amino-acid chain: ATP synthase subunit a (282 aa).

Helical transmembrane passes span 45 to 65, 106 to 126, 160 to 179, 232 to 252, and 253 to 273; these read AIHV…LWLF, IAPL…MDLI, INAT…FYSI, LIFI…SVPW, and AIFH…LTIV.

Belongs to the ATPase A chain family. As to quaternary structure, F-type ATPases have 2 components, CF(1) - the catalytic core - and CF(0) - the membrane proton channel. CF(1) has five subunits: alpha(3), beta(3), gamma(1), delta(1), epsilon(1). CF(0) has three main subunits: a(1), b(2) and c(9-12). The alpha and beta chains form an alternating ring which encloses part of the gamma chain. CF(1) is attached to CF(0) by a central stalk formed by the gamma and epsilon chains, while a peripheral stalk is formed by the delta and b chains.

It localises to the cell inner membrane. Key component of the proton channel; it plays a direct role in the translocation of protons across the membrane. The polypeptide is ATP synthase subunit a (Marinomonas sp. (strain MWYL1)).